We begin with the raw amino-acid sequence, 211 residues long: Uracil phosphoribosyltransferase (211 aa).

5-phospho-alpha-D-ribose 1-diphosphate-binding positions include Arg-78, Arg-103, and 130–138 (DPMLATGNS). Uracil contacts are provided by residues Ile-193 and 198-200 (GDA). A 5-phospho-alpha-D-ribose 1-diphosphate-binding site is contributed by Asp-199.

It belongs to the UPRTase family. Mg(2+) is required as a cofactor.

The enzyme catalyses UMP + diphosphate = 5-phospho-alpha-D-ribose 1-diphosphate + uracil. Its pathway is pyrimidine metabolism; UMP biosynthesis via salvage pathway; UMP from uracil: step 1/1. Its activity is regulated as follows. Allosterically activated by GTP. In terms of biological role, catalyzes the conversion of uracil and 5-phospho-alpha-D-ribose 1-diphosphate (PRPP) to UMP and diphosphate. In Acinetobacter baumannii (strain ATCC 17978 / DSM 105126 / CIP 53.77 / LMG 1025 / NCDC KC755 / 5377), this protein is Uracil phosphoribosyltransferase.